We begin with the raw amino-acid sequence, 90 residues long: UPF0237 protein MMP0657 (90 aa).

Positions 5-79 constitute an ACT domain; it reads VITVVGVDKP…SEIGVKINVQ (75 aa).

The protein belongs to the UPF0237 family.

The chain is UPF0237 protein MMP0657 from Methanococcus maripaludis (strain DSM 14266 / JCM 13030 / NBRC 101832 / S2 / LL).